The chain runs to 556 residues: Glutamine--tRNA ligase (556 aa).

Positions 34 to 44 (PEPNGYLHIGH) match the 'HIGH' region motif. Residues 35 to 37 (EPN) and 41 to 47 (HIGHAKS) contribute to the ATP site. Aspartate 67 and tyrosine 212 together coordinate L-glutamine. Residues threonine 231, 261–262 (RL), and 269–271 (MSK) each bind ATP. Positions 268 to 272 (VMSKR) match the 'KMSKS' region motif.

It belongs to the class-I aminoacyl-tRNA synthetase family. In terms of assembly, monomer.

The protein resides in the cytoplasm. It catalyses the reaction tRNA(Gln) + L-glutamine + ATP = L-glutaminyl-tRNA(Gln) + AMP + diphosphate. The chain is Glutamine--tRNA ligase from Vibrio cholerae serotype O1 (strain ATCC 39315 / El Tor Inaba N16961).